The following is a 261-amino-acid chain: Gap junction beta-6 protein (261 aa).

Over 1–22 the chain is Cytoplasmic; the sequence is MDWGTLHTVIGGVNKHSTSIGK. Residues 23-45 form a helical membrane-spanning segment; it reads VWITVIFIFRVMILVVAAQEVWG. The Extracellular segment spans residues 46–75; the sequence is DEQEDFVCNTLQPGCKNVCYDHFFPVSHIR. A helical membrane pass occupies residues 76-98; that stretch reads LWALQLIFVSTPALLVAMHVAYY. Residues 99-131 lie on the Cytoplasmic side of the membrane; it reads RHETARKFIRGEKRNEFKDLEDIKRQKVRIEGS. A helical membrane pass occupies residues 132–154; the sequence is LWWTYTSSIFFRIIFEAAFMYVF. Over 155–192 the chain is Extracellular; the sequence is YFLYNGYHLPWVLKCGIDPCPNLVDCFISRPTEKTVFT. Residues 193 to 215 traverse the membrane as a helical segment; it reads VFMISASVICMLLNVAELCYLLL. Residues 216–261 are Cytoplasmic-facing; the sequence is KLCFRRSKRTQAQRNHPNHALKESKQNEMNELISDSGQNAITSFPS.

The protein belongs to the connexin family. Beta-type (group I) subfamily. As to quaternary structure, a connexon is composed of a hexamer of connexins. Interacts with CNST. Highly expressed in adult brain and skin. Less in uterus, lung and eye. Very low in testis and sciatic nerve. No expression before birth.

Its subcellular location is the cell membrane. The protein localises to the cell junction. It localises to the gap junction. Functionally, one gap junction consists of a cluster of closely packed pairs of transmembrane channels, the connexons, through which materials of low MW diffuse from one cell to a neighboring cell. This chain is Gap junction beta-6 protein (Gjb6), found in Mus musculus (Mouse).